A 257-amino-acid polypeptide reads, in one-letter code: Zinc import ATP-binding protein ZnuC (257 aa).

In terms of domain architecture, ABC transporter spans 6 to 221 (IRLEQVGVSF…PAFVELFGQN (216 aa)). An ATP-binding site is contributed by 38–45 (GPNGAGKT).

The protein belongs to the ABC transporter superfamily. Zinc importer (TC 3.A.1.15.5) family. As to quaternary structure, the complex is composed of two ATP-binding proteins (ZnuC), two transmembrane proteins (ZnuB) and a solute-binding protein (ZnuA).

The protein localises to the cell inner membrane. It catalyses the reaction Zn(2+)(out) + ATP(in) + H2O(in) = Zn(2+)(in) + ADP(in) + phosphate(in) + H(+)(in). In terms of biological role, part of the ABC transporter complex ZnuABC involved in zinc import. Responsible for energy coupling to the transport system. In Pseudomonas entomophila (strain L48), this protein is Zinc import ATP-binding protein ZnuC.